The chain runs to 538 residues: Methyl-accepting chemotaxis protein NahY (538 aa).

Residues 1–9 (MQQFTIRTR) lie on the Cytoplasmic side of the membrane. Residues 10 to 30 (LLMLVGAMFIGFITIELMGFS) form a helical membrane-spanning segment. Residues 31-187 (ALQRGVASLN…AVVLYDSSRT (157 aa)) lie on the Periplasmic side of the membrane. The helical transmembrane segment at 188–208 (MLALLLLGILICGGVFATRLI) threads the bilayer. The region spanning 209–261 (RSIIHPLTTLKDAAARVALGDLSQSIQVSGRNEVTDVQQSVQAMQANLRNTLQ) is the HAMP domain. Topologically, residues 209–538 (RSIIHPLTTL…LNNLVNRFSM (330 aa)) are cytoplasmic. Residues 266–502 (SAAQLAAAAE…EVDRNLVAIS (237 aa)) form the Methyl-accepting transducer domain.

Belongs to the methyl-accepting chemotaxis (MCP) protein family.

It is found in the cell inner membrane. Functionally, chemotactic-signal transducers respond to changes in the concentration of attractants and repellents in the environment, transduce a signal from the outside to the inside of the cell, and facilitate sensory adaptation through the variation of the level of methylation. Chemoreceptor for naphthalene or a related compound. May facilitate biodegradation. This is Methyl-accepting chemotaxis protein NahY (nahY) from Pseudomonas putida (Arthrobacter siderocapsulatus).